The following is a 295-amino-acid chain: Tyrosine recombinase XerC (295 aa).

The Core-binding (CB) domain maps to 1-85 (MLTALNRYWD…ALRRFLSFLV (85 aa)). The Tyr recombinase domain occupies 106–285 (HLPKNMDGEQ…NFQHLAEVYD (180 aa)). Catalysis depends on residues Arg-145, Lys-169, His-237, Arg-240, and His-263. Tyr-272 acts as the O-(3'-phospho-DNA)-tyrosine intermediate in catalysis.

The protein belongs to the 'phage' integrase family. XerC subfamily. Forms a cyclic heterotetrameric complex composed of two molecules of XerC and two molecules of XerD.

It is found in the cytoplasm. Site-specific tyrosine recombinase, which acts by catalyzing the cutting and rejoining of the recombining DNA molecules. The XerC-XerD complex is essential to convert dimers of the bacterial chromosome into monomers to permit their segregation at cell division. It also contributes to the segregational stability of plasmids. The polypeptide is Tyrosine recombinase XerC (Haemophilus influenzae (strain 86-028NP)).